A 379-amino-acid chain; its full sequence is F-box protein At5g18160 (379 aa).

The disordered stretch occupies residues 1–26; it reads MDKQDEKKQGTTKSSSTLTTRCSHGN. Positions 11-26 are enriched in polar residues; it reads TTKSSSTLTTRCSHGN. The F-box domain maps to 28–74; that stretch reads ISQSNSIPLDITIEILSRLPAKSIVRSRSVSKLWSSITTTPEFIKHR.

This chain is F-box protein At5g18160, found in Arabidopsis thaliana (Mouse-ear cress).